A 219-amino-acid polypeptide reads, in one-letter code: Transmembrane protein 247 (219 aa).

Basic and acidic residues-rich tracts occupy residues 1 to 10 and 29 to 45; these read MAAEDREMME and SKSE…ESQK. Residues 1–101 form a disordered region; it reads MAAEDREMME…LPPTPGTERN (101 aa). Residues 121–156 are a coiled coil; the sequence is LHEKNQRQRQHEVVMEQLQRERQHEVVMEQLQQEAA. 2 helical membrane passes run 167–187 and 194–214; these read FLLP…IHII and VFFL…LCLI.

It is found in the membrane. In Homo sapiens (Human), this protein is Transmembrane protein 247 (TMEM247).